Reading from the N-terminus, the 858-residue chain is Protein lines (858 aa).

Residues Met1–Ser102 form a disordered region. Composition is skewed to low complexity over residues Ser20 to Ser30 and Leu65 to Ser102.

This sequence belongs to the protein lines family. Interacts with drm. As to expression, expressed throughout the embryo, including the hindgut, posterior midgut and embryonic epidermis.

It localises to the cytoplasm. The protein resides in the nucleus. Functionally, has a dual role as a segment polarity protein and as a modulator of the Abd-B protein. Required for Abd-B to activate the transcription of genes (including ems, cut and sal) that are involved in posterior spiracle morphogenesis. Also required for Abd-B to form an eighth abdominal denticle belt. Acts in a hierarchy downstream of drm and upstream of bowl during foregut and hindgut patterning and morphogenesis. Involved in cell rearrangement during elongation of the embryonic hindgut. Required to regulate expression of embryonic hindgut patterning genes in order to establish the large intestine and at least some rectum, and to repress small intestine fate. Required for late wingless (wg)-dependent cell fate specification in the dorsal embryonic epidermis. Acts in concert with wg to regulate expression of wg itself and also to regulate wg-target genes. May have a role in ventral epidermal patterning, independent of wg signaling. This is Protein lines from Drosophila melanogaster (Fruit fly).